A 263-amino-acid polypeptide reads, in one-letter code: Phosphatidylglycerol--prolipoprotein diacylglyceryl transferase (263 aa).

4 helical membrane passes run 7–27 (IFSIGPVSIHWYSLAYVLGIV), 50–70 (LLTATIIGIILGGRLGFVLIY), 85–105 (TWKGGMSFHGGAIGVLCAVII), and 112–132 (IPIFYTLDLISCGVPIGLFLG). R133 serves as a coordination point for a 1,2-diacyl-sn-glycero-3-phospho-(1'-sn-glycerol). The next 3 helical transmembrane spans lie at 169–189 (LYEAFFEGLLFFAIANSLFFL), 197–217 (GTLTGIAVIWYGTVRFVVEFF), and 233–253 (MGQLLSIFMTLLGIIVYLSAL).

The protein belongs to the Lgt family.

The protein localises to the cell membrane. The catalysed reaction is L-cysteinyl-[prolipoprotein] + a 1,2-diacyl-sn-glycero-3-phospho-(1'-sn-glycerol) = an S-1,2-diacyl-sn-glyceryl-L-cysteinyl-[prolipoprotein] + sn-glycerol 1-phosphate + H(+). It participates in protein modification; lipoprotein biosynthesis (diacylglyceryl transfer). Catalyzes the transfer of the diacylglyceryl group from phosphatidylglycerol to the sulfhydryl group of the N-terminal cysteine of a prolipoprotein, the first step in the formation of mature lipoproteins. In Wolbachia sp. subsp. Brugia malayi (strain TRS), this protein is Phosphatidylglycerol--prolipoprotein diacylglyceryl transferase.